The primary structure comprises 492 residues: Aspartyl/glutamyl-tRNA(Asn/Gln) amidotransferase subunit B (492 aa).

The protein belongs to the GatB/GatE family. GatB subfamily. As to quaternary structure, heterotrimer of A, B and C subunits.

It catalyses the reaction L-glutamyl-tRNA(Gln) + L-glutamine + ATP + H2O = L-glutaminyl-tRNA(Gln) + L-glutamate + ADP + phosphate + H(+). The enzyme catalyses L-aspartyl-tRNA(Asn) + L-glutamine + ATP + H2O = L-asparaginyl-tRNA(Asn) + L-glutamate + ADP + phosphate + 2 H(+). Allows the formation of correctly charged Asn-tRNA(Asn) or Gln-tRNA(Gln) through the transamidation of misacylated Asp-tRNA(Asn) or Glu-tRNA(Gln) in organisms which lack either or both of asparaginyl-tRNA or glutaminyl-tRNA synthetases. The reaction takes place in the presence of glutamine and ATP through an activated phospho-Asp-tRNA(Asn) or phospho-Glu-tRNA(Gln). The chain is Aspartyl/glutamyl-tRNA(Asn/Gln) amidotransferase subunit B from Bradyrhizobium sp. (strain BTAi1 / ATCC BAA-1182).